We begin with the raw amino-acid sequence, 406 residues long: MSKGYYSILFSQTTTNLGFSLYTMVVISFLFKMTNSTTIASMVTLISIIFRIFGSAILPLITIRLKLPLTIIISQLIQMLLLICLFYALLRTYSNQTLILVFIIISCISFFNGWFSPLKSAIIGEIISPDRRVKANGLLSTVDQTFQFVGWSLGGLIIAFLGEGYTIILTIFLLFTSLLSLLFCLPHGHANSVIREKNSPNKSIVSGWRYLFSQKKLRTIIIMDLIESWAGMIWIGSVSLAFVNEVLHKGESWWGFINGAYYLGSMIGGFIIYKLSERFQNKLINFMLIGAVSYGSLTLIYGFISNSYLALILVLFMGPAYILRDLTQETLIQNITTEQTRINIMSARSSLVQFIFMFSILAIGAISDFLGVRLVYVSAGILLLVSAIYGFSQLQFKKKVNKHISF.

A run of 10 helical transmembrane segments spans residues 7–27 (SILF…MVVI), 43–63 (VTLI…LITI), 69–89 (LTII…FYAL), 98–118 (LILV…FSPL), 155–175 (GLII…FLLF), 220–240 (IIIM…SVSL), 253–273 (WWGF…FIIY), 297–317 (LTLI…VLFM), 352–372 (VQFI…FLGV), and 374–394 (LVYV…FSQL).

It belongs to the major facilitator superfamily.

It localises to the cell membrane. This is an uncharacterized protein from Bacillus subtilis (strain 168).